Reading from the N-terminus, the 130-residue chain is Small ribosomal subunit protein uS8 (130 aa).

Belongs to the universal ribosomal protein uS8 family. In terms of assembly, part of the 30S ribosomal subunit.

One of the primary rRNA binding proteins, it binds directly to 16S rRNA central domain where it helps coordinate assembly of the platform of the 30S subunit. The chain is Small ribosomal subunit protein uS8 from Methanothermococcus thermolithotrophicus (Methanococcus thermolithotrophicus).